The following is a 233-amino-acid chain: Orotidine 5'-phosphate decarboxylase (233 aa).

Residues Asp-10, Lys-32, 59 to 68, Thr-119, Arg-180, Gln-189, Gly-209, and Arg-210 each bind substrate; that span reads DLKFHDIPNT. Catalysis depends on Lys-61, which acts as the Proton donor.

This sequence belongs to the OMP decarboxylase family. Type 1 subfamily. As to quaternary structure, homodimer.

It carries out the reaction orotidine 5'-phosphate + H(+) = UMP + CO2. Its pathway is pyrimidine metabolism; UMP biosynthesis via de novo pathway; UMP from orotate: step 2/2. Functionally, catalyzes the decarboxylation of orotidine 5'-monophosphate (OMP) to uridine 5'-monophosphate (UMP). The sequence is that of Orotidine 5'-phosphate decarboxylase from Pasteurella multocida (strain Pm70).